A 438-amino-acid polypeptide reads, in one-letter code: MQTIYTKITDIKGNLITVEAEGARLGELATITRSDGRSSYASVLRFDLKKVTLQVFGGTSGLSTGDHVTFLGRPMEVTFGSSLLGRRLNGIGKPIDNEGECFGEPIEIATPTFNPVCRIVPRSMVRTNIPMIDVFNCLVKSQKIPIFSSSGEHHNALLMRIAAQTDADIVVIGGMGLTFVDYSFFVEESKKLGFADKCVMFIHKAVDAPVECVLVPDMALACAEKFAVEEKKNVLVLLTDMTAFADALKEISITMDQIPANRGYPGSLYSDLALRYEKAVEIADGGSITLITVTTMPSDDITHPVPDNTGYITEGQFYLRNNRIDPFGSLSRLKQLVIGKVTREDHGDLANALIRLYADSRKATERMAMGFKLSNWDKKLLAFSELFETRLMSLEVNIPLEEALDIGWKILAQSFTSEEVGIKAQLINKYWPKACLSK.

Belongs to the ATPase alpha/beta chains family.

Functionally, produces ATP from ADP in the presence of a proton gradient across the membrane. The V-type beta chain is a regulatory subunit. The polypeptide is V-type ATP synthase beta chain (atpB) (Chlamydia pneumoniae (Chlamydophila pneumoniae)).